We begin with the raw amino-acid sequence, 265 residues long: Phosphatidylserine decarboxylase proenzyme (265 aa).

Ser183 (schiff-base intermediate with substrate; via pyruvic acid) is an active-site residue. At Ser183 the chain carries Pyruvic acid (Ser); by autocatalysis. Positions Pro218 to Ser242 are disordered.

Belongs to the phosphatidylserine decarboxylase family. PSD-A subfamily. As to quaternary structure, heterodimer of a large membrane-associated beta subunit and a small pyruvoyl-containing alpha subunit. The cofactor is pyruvate. In terms of processing, is synthesized initially as an inactive proenzyme. Formation of the active enzyme involves a self-maturation process in which the active site pyruvoyl group is generated from an internal serine residue via an autocatalytic post-translational modification. Two non-identical subunits are generated from the proenzyme in this reaction, and the pyruvate is formed at the N-terminus of the alpha chain, which is derived from the carboxyl end of the proenzyme. The post-translation cleavage follows an unusual pathway, termed non-hydrolytic serinolysis, in which the side chain hydroxyl group of the serine supplies its oxygen atom to form the C-terminus of the beta chain, while the remainder of the serine residue undergoes an oxidative deamination to produce ammonia and the pyruvoyl prosthetic group on the alpha chain.

Its subcellular location is the cell membrane. It catalyses the reaction a 1,2-diacyl-sn-glycero-3-phospho-L-serine + H(+) = a 1,2-diacyl-sn-glycero-3-phosphoethanolamine + CO2. The protein operates within phospholipid metabolism; phosphatidylethanolamine biosynthesis; phosphatidylethanolamine from CDP-diacylglycerol: step 2/2. Its function is as follows. Catalyzes the formation of phosphatidylethanolamine (PtdEtn) from phosphatidylserine (PtdSer). The polypeptide is Phosphatidylserine decarboxylase proenzyme (Neisseria meningitidis serogroup C (strain 053442)).